Here is a 259-residue protein sequence, read N- to C-terminus: Hydroxyethylthiazole kinase (259 aa).

A substrate-binding site is contributed by Met-50. ATP is bound by residues Arg-122 and Thr-168. Residue Gly-195 participates in substrate binding.

This sequence belongs to the Thz kinase family. Mg(2+) serves as cofactor.

It catalyses the reaction 5-(2-hydroxyethyl)-4-methylthiazole + ATP = 4-methyl-5-(2-phosphooxyethyl)-thiazole + ADP + H(+). It functions in the pathway cofactor biosynthesis; thiamine diphosphate biosynthesis; 4-methyl-5-(2-phosphoethyl)-thiazole from 5-(2-hydroxyethyl)-4-methylthiazole: step 1/1. Catalyzes the phosphorylation of the hydroxyl group of 4-methyl-5-beta-hydroxyethylthiazole (THZ). The sequence is that of Hydroxyethylthiazole kinase from Escherichia coli O127:H6 (strain E2348/69 / EPEC).